Consider the following 514-residue polypeptide: Ribonuclease Y (514 aa).

Residues 2-22 form a helical membrane-spanning segment; sequence EDLIVAIVVGAFSSAISIFVV. The KH domain maps to 204 to 268; the sequence is LINNIPLNDE…VATKTIRELL (65 aa). In terms of domain architecture, HD spans 330-423; the sequence is ALAHTLEVAH…VCAADALSAA (94 aa).

It belongs to the RNase Y family.

It is found in the cell membrane. Endoribonuclease that initiates mRNA decay. This is Ribonuclease Y from Aliarcobacter butzleri (strain RM4018) (Arcobacter butzleri).